A 1704-amino-acid chain; its full sequence is Arf-GAP with Rho-GAP domain, ANK repeat and PH domain-containing protein 2 (1704 aa).

In terms of domain architecture, SAM spans 6–70 (EVNVDIKDFL…LKQLQIILSK (65 aa)). The residue at position 77 (Tyr77) is a Phosphotyrosine. The interval 126–161 (NLEDSDASVERSQYPQSDDKLSPPKRDFPTAEEPHL) is disordered. Basic and acidic residues predominate over residues 142–160 (SDDKLSPPKRDFPTAEEPH). 2 consecutive PH domains span residues 482–574 (KKVK…NALK) and 587–679 (TPEK…QSIA). In terms of domain architecture, Arf-GAP spans 676-811 (QSIAETLSDY…TLLASLTKEE (136 aa)). Residues 700 to 723 (CADCKAPDPDWASINLCVVICKKC) form a C4-type zinc finger. 2 PH domains span residues 878–1003 (DIHS…KHFV) and 1014–1114 (DYDL…AGTD). The region spanning 1116 to 1297 (NALQDQQLSK…DLINNYVEIF (182 aa)) is the Rho-GAP domain. The Ras-associating domain occupies 1326–1420 (GDLLIEVYVE…AYLVVKRFLT (95 aa)). The PH 5 domain maps to 1434-1537 (GSIKEGILKI…WMTSIFIAQH (104 aa)). Position 1632 is a phosphoserine (Ser1632). A disordered region spans residues 1636–1675 (LEDTEPEAPLGQPKGHKGLKTLRKTEDRNSKATLDSDHKL). Over residues 1658–1675 (RKTEDRNSKATLDSDHKL) the composition is skewed to basic and acidic residues.

In terms of tissue distribution, detected in brain, thymus, lymph node, thyroid, spinal cord, trachea, heart, skeletal muscle, spleen, kidney, liver, placenta, lung and peripheral blood leukocytes.

The protein resides in the cytoplasm. Functionally, phosphatidylinositol 3,4,5-trisphosphate-dependent GTPase-activating protein that modulates actin cytoskeleton remodeling by regulating ARF and RHO family members. Is activated by phosphatidylinositol 3,4,5-trisphosphate (PtdIns(3,4,5)P3) binding. Can be activated by phosphatidylinositol 3,4-bisphosphate (PtdIns(3,4,5)P2) binding, albeit with lower efficiency. The polypeptide is Arf-GAP with Rho-GAP domain, ANK repeat and PH domain-containing protein 2 (ARAP2) (Homo sapiens (Human)).